The chain runs to 207 residues: Probable GTP-binding protein EngB (207 aa).

The EngB-type G domain maps to 22-193 (RVPEIVFAGR…LAHFDHYLSG (172 aa)). GTP is bound by residues 30–37 (GRSNVGKS), 57–61 (GKTRL), 75–78 (DIPG), 142–145 (TKDD), and 172–174 (YSS). Positions 37 and 59 each coordinate Mg(2+).

The protein belongs to the TRAFAC class TrmE-Era-EngA-EngB-Septin-like GTPase superfamily. EngB GTPase family. Requires Mg(2+) as cofactor.

In terms of biological role, necessary for normal cell division and for the maintenance of normal septation. This Chlorobium luteolum (strain DSM 273 / BCRC 81028 / 2530) (Pelodictyon luteolum) protein is Probable GTP-binding protein EngB.